Reading from the N-terminus, the 713-residue chain is Polyphosphate kinase (713 aa).

Asn-63 is an ATP binding site. Mg(2+) is bound by residues Arg-394 and Arg-424. His-454 acts as the Phosphohistidine intermediate in catalysis. 3 residues coordinate ATP: Tyr-487, Arg-583, and His-611.

Belongs to the polyphosphate kinase 1 (PPK1) family. Mg(2+) serves as cofactor. Post-translationally, an intermediate of this reaction is the autophosphorylated ppk in which a phosphate is covalently linked to a histidine residue through a N-P bond.

It catalyses the reaction [phosphate](n) + ATP = [phosphate](n+1) + ADP. Its function is as follows. Catalyzes the reversible transfer of the terminal phosphate of ATP to form a long-chain polyphosphate (polyP). The sequence is that of Polyphosphate kinase from Prosthecochloris aestuarii (strain DSM 271 / SK 413).